The primary structure comprises 142 residues: MERTLLLVKPDGVNRGLSGEILGRMEKLGLKLIGLRMLQMDAVLADKHYAPHRARPFFKDLVTYITSGPITAAVFEGENAVEKMRKAMGATDPAKSEKGTVRGDLGINIEQNTVHGSDSAENAKHEISLFFSESELVNYDRR.

Lys9, Phe57, Arg85, Thr91, Arg102, and Asn112 together coordinate ATP. His115 serves as the catalytic Pros-phosphohistidine intermediate.

Belongs to the NDK family. As to quaternary structure, homotetramer. Requires Mg(2+) as cofactor.

The protein localises to the cytoplasm. The catalysed reaction is a 2'-deoxyribonucleoside 5'-diphosphate + ATP = a 2'-deoxyribonucleoside 5'-triphosphate + ADP. The enzyme catalyses a ribonucleoside 5'-diphosphate + ATP = a ribonucleoside 5'-triphosphate + ADP. Its function is as follows. Major role in the synthesis of nucleoside triphosphates other than ATP. The ATP gamma phosphate is transferred to the NDP beta phosphate via a ping-pong mechanism, using a phosphorylated active-site intermediate. This Dehalococcoides mccartyi (strain CBDB1) protein is Nucleoside diphosphate kinase.